The chain runs to 407 residues: Probable acyl-CoA dehydrogenase FadE2 (407 aa).

The protein belongs to the acyl-CoA dehydrogenase family. FAD serves as cofactor.

The catalysed reaction is a 2,3-saturated acyl-CoA + A = a 2,3-dehydroacyl-CoA + AH2. The chain is Probable acyl-CoA dehydrogenase FadE2 from Mycobacterium tuberculosis (strain ATCC 25618 / H37Rv).